The sequence spans 447 residues: Mitogen-activated protein kinase HOG1 (447 aa).

Residues 23–302 (YSDLNPVGMG…AADALAHPYL (280 aa)) form the Protein kinase domain. ATP is bound by residues 29 to 37 (VGMGAFGLV) and Lys-52. Catalysis depends on Asp-144, which acts as the Proton acceptor. The residue at position 174 (Thr-174) is a Phosphothreonine. The short motif at 174 to 176 (TGY) is the TXY element. Tyr-176 is modified (phosphotyrosine). The segment at 394 to 414 (LNEDGTPVSGSIAENSSNSAT) is disordered. Over residues 401–414 (VSGSIAENSSNSAT) the composition is skewed to polar residues.

The protein belongs to the protein kinase superfamily. Ser/Thr protein kinase family. MAP kinase subfamily. HOG1 sub-subfamily. Mg(2+) is required as a cofactor. In terms of processing, dually phosphorylated on Thr-174 and Tyr-176, which activates the enzyme.

Its subcellular location is the cytoplasm. It localises to the nucleus. It carries out the reaction L-seryl-[protein] + ATP = O-phospho-L-seryl-[protein] + ADP + H(+). It catalyses the reaction L-threonyl-[protein] + ATP = O-phospho-L-threonyl-[protein] + ADP + H(+). Its activity is regulated as follows. Activated by tyrosine and threonine phosphorylation. Its function is as follows. Proline-directed serine/threonine-protein kinase involved in a signal transduction pathway that is activated by changes in the osmolarity of the extracellular environment. Controls osmotic regulation of transcription of target genes. The sequence is that of Mitogen-activated protein kinase HOG1 (HOG1) from Candida glabrata (strain ATCC 2001 / BCRC 20586 / JCM 3761 / NBRC 0622 / NRRL Y-65 / CBS 138) (Yeast).